The primary structure comprises 421 residues: UPF0229 protein lpl2726 (421 aa).

A disordered region spans residues 83-110; the sequence is IAGDRIKRPGGGGSGGAGGNASDSGEGE. Positions 91–101 are enriched in gly residues; it reads PGGGGSGGAGG.

Belongs to the UPF0229 family.

The sequence is that of UPF0229 protein lpl2726 from Legionella pneumophila (strain Lens).